Here is a 206-residue protein sequence, read N- to C-terminus: Ribosomal RNA large subunit methyltransferase E (206 aa).

5 residues coordinate S-adenosyl-L-methionine: Gly-63, Trp-65, Asp-83, Asp-99, and Asp-124. Lys-164 functions as the Proton acceptor in the catalytic mechanism.

It belongs to the class I-like SAM-binding methyltransferase superfamily. RNA methyltransferase RlmE family.

The protein localises to the cytoplasm. The catalysed reaction is uridine(2552) in 23S rRNA + S-adenosyl-L-methionine = 2'-O-methyluridine(2552) in 23S rRNA + S-adenosyl-L-homocysteine + H(+). In terms of biological role, specifically methylates the uridine in position 2552 of 23S rRNA at the 2'-O position of the ribose in the fully assembled 50S ribosomal subunit. The chain is Ribosomal RNA large subunit methyltransferase E from Buchnera aphidicola subsp. Acyrthosiphon pisum (strain APS) (Acyrthosiphon pisum symbiotic bacterium).